The following is a 419-amino-acid chain: L-rhamnose isomerase (419 aa).

Mn(2+) contacts are provided by histidine 262, aspartate 294, and aspartate 296.

Belongs to the rhamnose isomerase family. In terms of assembly, homotetramer. Requires Mn(2+) as cofactor.

It is found in the cytoplasm. It carries out the reaction L-rhamnopyranose = L-rhamnulose. The protein operates within carbohydrate degradation; L-rhamnose degradation; glycerone phosphate from L-rhamnose: step 1/3. Its function is as follows. Catalyzes the interconversion of L-rhamnose and L-rhamnulose. The polypeptide is L-rhamnose isomerase (Escherichia coli O17:K52:H18 (strain UMN026 / ExPEC)).